Consider the following 176-residue polypeptide: Small ribosomal subunit protein uS5 (176 aa).

An S5 DRBM domain is found at 14-77 (MQEKLIHINR…DQARRWMTSI (64 aa)).

Belongs to the universal ribosomal protein uS5 family. In terms of assembly, part of the 30S ribosomal subunit. Contacts proteins S4 and S8.

With S4 and S12 plays an important role in translational accuracy. Its function is as follows. Located at the back of the 30S subunit body where it stabilizes the conformation of the head with respect to the body. In Acidithiobacillus ferrooxidans (strain ATCC 23270 / DSM 14882 / CIP 104768 / NCIMB 8455) (Ferrobacillus ferrooxidans (strain ATCC 23270)), this protein is Small ribosomal subunit protein uS5.